The sequence spans 113 residues: MNTVRVTFLLVFVLAVSLGQADKDENRMEMLEKTEQGKSYLDFAENLLLQKLEELEARLLEEDSEESRNSRQKRCIGEGVPRDENDPRCCSGLVCLKPTLHGIWYKSYYCYKK.

The first 21 residues, 1-21 (MNTVRVTFLLVFVLAVSLGQA), serve as a signal peptide directing secretion. Residues 22 to 74 (DKDENRMEMLEKTEQGKSYLDFAENLLLQKLEELEARLLEEDSEESRNSRQKR) constitute a propeptide that is removed on maturation. The span at 60 to 69 (LEEDSEESRN) shows a compositional bias: basic and acidic residues. A disordered region spans residues 60–87 (LEEDSEESRNSRQKRCIGEGVPRDENDP). Cystine bridges form between Cys75-Cys90 and Cys89-Cys110.

Belongs to the neurotoxin 14 (magi-1) family. 01 (HNTX-16) subfamily. As to expression, expressed by the venom gland.

It localises to the secreted. Functionally, probable ion channel inhibitor. This chain is U11-theraphotoxin-Hhn1e, found in Cyriopagopus hainanus (Chinese bird spider).